The chain runs to 187 residues: Transmembrane protein 11-B, mitochondrial (187 aa).

Transmembrane regions (helical) follow at residues 79–95 (TAVLSGTACLLTPLALP) and 102–119 (VSLPAGVLSLACSTLYGI).

It belongs to the TMEM11 family.

It localises to the mitochondrion inner membrane. Plays a role in mitochondrial morphogenesis. The polypeptide is Transmembrane protein 11-B, mitochondrial (tmem11-b) (Xenopus laevis (African clawed frog)).